The sequence spans 128 residues: Transmembrane protein 234 homolog (128 aa).

4 consecutive transmembrane segments (helical) span residues 3–23 (TYNI…NPLI), 53–73 (PSYT…FYTL), 80–100 (LVVP…GMLL), and 104–124 (VLHF…TICV).

The protein belongs to the TMEM234 family.

It is found in the membrane. The sequence is that of Transmembrane protein 234 homolog from Dictyostelium discoideum (Social amoeba).